The primary structure comprises 351 residues: N-terminal EF-hand calcium-binding protein 1 (351 aa).

The residue at position 4 (Ser-4) is a Phosphoserine. 2 consecutive EF-hand domains span residues 26–61 (KGMS…GVLS) and 60–95 (LSGE…HLGE). Ca(2+) contacts are provided by Asp-39, Asn-41, Asp-43, Lys-45, and Glu-50. A coiled-coil region spans residues 135–163 (LLKETLNQLQSLQNSLECAMETTEEQTRQ). The disordered stretch occupies residues 180-203 (GKRSSRRVQRHNSFSPNSPQFNVS). Polar residues predominate over residues 190–202 (HNSFSPNSPQFNV). A phosphoserine mark is found at Ser-192 and Ser-197. Positions 209–275 (EEDNQWMTQI…EEFQLALKHY (67 aa)) form a coiled coil. One can recognise an ABM domain in the interval 252–340 (MLVQRQMSVI…LETPELTSTM (89 aa)).

As to quaternary structure, interacts with STX1. May interact with CPNE6. In terms of tissue distribution, expressed in brain (at protein level).

It is found in the cytoplasm. This Homo sapiens (Human) protein is N-terminal EF-hand calcium-binding protein 1 (NECAB1).